We begin with the raw amino-acid sequence, 62 residues long: Large ribosomal subunit protein uL29 (62 aa).

The protein belongs to the universal ribosomal protein uL29 family.

This Trichlorobacter lovleyi (strain ATCC BAA-1151 / DSM 17278 / SZ) (Geobacter lovleyi) protein is Large ribosomal subunit protein uL29.